The chain runs to 555 residues: HERV-H_2q24.1 provirus ancestral Env polyprotein (555 aa).

Positions 1–35 (MILAGRAPSNTSTLMKFYSLLLYSLLFSFPFLYHP) are cleaved as a signal peptide. Residues 36–515 (LPLPSYLHHT…WALSNWMSWV (480 aa)) are Extracellular-facing. Residue Asn47 is glycosylated (N-linked (GlcNAc...) asparagine). Residues 64 to 67 (CWLC) carry the CXXC motif. Residues Asn222, Asn265, Asn283, Asn352, and Asn370 are each glycosylated (N-linked (GlcNAc...) asparagine). The segment at 388–408 (VIPLIPLMVGLGLSASTIALS) is fusion peptide. The N-linked (GlcNAc...) asparagine glycan is linked to Asn475. Residues 516-536 (LPILSPLIPIFLLLLFGPCIF) form a helical membrane-spanning segment. The Cytoplasmic segment spans residues 537–555 (HLVSQFIQNRIQAITNHSI).

It belongs to the gamma type-C retroviral envelope protein family. HERV class-I H env subfamily. In terms of assembly, the surface (SU) and transmembrane (TM) proteins form a heterodimer. SU and TM are attached by noncovalent interactions or by a labile interchain disulfide bond. Specific enzymatic cleavages in vivo yield the mature SU and TM proteins. Low expression in testis.

It localises to the virion. The protein localises to the cell membrane. In terms of biological role, retroviral envelope proteins mediate receptor recognition and membrane fusion during early infection. Endogenous envelope proteins may have kept, lost or modified their original function during evolution. This endogenous envelope protein has lost its original fusogenic properties. Its function is as follows. SU mediates receptor recognition. TM anchors the envelope heterodimer to the viral membrane through one transmembrane domain. The other hydrophobic domain, called fusion peptide, mediates fusion of the viral membrane with the target cell membrane. This Homo sapiens (Human) protein is HERV-H_2q24.1 provirus ancestral Env polyprotein.